The sequence spans 136 residues: Frataxin, mitochondrial (136 aa).

It belongs to the frataxin family. As to quaternary structure, monomer. Oligomer.

The protein localises to the mitochondrion. The catalysed reaction is 4 Fe(2+) + O2 + 4 H(+) = 4 Fe(3+) + 2 H2O. Functionally, promotes the biosynthesis of heme as well as the assembly and repair of iron-sulfur clusters by delivering Fe(2+) to proteins involved in these pathways. May play a role in the protection against iron-catalyzed oxidative stress through its ability to catalyze the oxidation of Fe(2+) to Fe(3+). May be able to store large amounts of the metal in the form of a ferrihydrite mineral by oligomerization. The sequence is that of Frataxin, mitochondrial (frh-1) from Caenorhabditis elegans.